We begin with the raw amino-acid sequence, 32 residues long: Acatoxin 1 (32 aa).

Disulfide bonds link C1-C15, C8-C20, and C14-C26.

It is found in the secreted. It localises to the nematocyst. Reversibly inhibits acid-sensing ion channels (ASIC) in rat dorsal root ganglia neurons. Reversibly inhibits voltage-gated potassium channels (Kv) in rat DRG neurons. The polypeptide is Acatoxin 1 (Anthopleura cascaia (Sea anemone)).